The chain runs to 344 residues: Dihydroorotase (344 aa).

Residues histidine 14 and histidine 16 each coordinate Zn(2+). Substrate contacts are provided by residues 16–18 (HLR) and asparagine 42. Lysine 100, histidine 137, and histidine 175 together coordinate Zn(2+). The residue at position 100 (lysine 100) is an N6-carboxylysine. Histidine 137 contributes to the substrate binding site. Leucine 220 contacts substrate. Aspartate 248 lines the Zn(2+) pocket. The active site involves aspartate 248. Substrate is bound by residues histidine 252 and alanine 264.

It belongs to the metallo-dependent hydrolases superfamily. DHOase family. Class II DHOase subfamily. Homodimer. Zn(2+) is required as a cofactor.

The catalysed reaction is (S)-dihydroorotate + H2O = N-carbamoyl-L-aspartate + H(+). It functions in the pathway pyrimidine metabolism; UMP biosynthesis via de novo pathway; (S)-dihydroorotate from bicarbonate: step 3/3. Catalyzes the reversible cyclization of carbamoyl aspartate to dihydroorotate. The chain is Dihydroorotase from Cupriavidus pinatubonensis (strain JMP 134 / LMG 1197) (Cupriavidus necator (strain JMP 134)).